A 58-amino-acid polypeptide reads, in one-letter code: UPF0337 protein SAV_738 (58 aa).

The disordered stretch occupies residues 1-58 (MAADEKAQANGEQAKGKVKKVVGGAAGNESLKGKGHAEESKGDLRAAKEKAKDAIKRK). The span at 31–58 (LKGKGHAEESKGDLRAAKEKAKDAIKRK) shows a compositional bias: basic and acidic residues.

It belongs to the UPF0337 (CsbD) family.

The chain is UPF0337 protein SAV_738 from Streptomyces avermitilis (strain ATCC 31267 / DSM 46492 / JCM 5070 / NBRC 14893 / NCIMB 12804 / NRRL 8165 / MA-4680).